Consider the following 396-residue polypeptide: Metallophosphoesterase 1 (396 aa).

Residues 27-47 (IAVVFAVLLFCEFLIYYLAIF) form a helical membrane-spanning segment. A divalent metal cation contacts are provided by Asp77, Asp119, Asn157, His249, His303, and His305. A helical transmembrane segment spans residues 356–376 (VVLVIYCGAVGFLVVLTLSHL). A Di-lysine motif motif is present at residues 392–396 (KRKTR).

Belongs to the metallophosphoesterase superfamily. MPPE1 family. In terms of assembly, interacts with GPI-anchor proteins (via the GPI portion). Interacts with TMED10. Mn(2+) is required as a cofactor.

It localises to the endoplasmic reticulum-Golgi intermediate compartment membrane. Its function is as follows. Metallophosphoesterase that catalyzes the removal of a side-chain ethanolamine-phosphate (EtNP) from the second mannose of the GPI-anchor protein intermediate. Participates in the glycan remodeling steps of GPI-anchor maturation to allow an efficient transport of GPI-anchor proteins from the endoplasmic reticulum to the Golgi. The polypeptide is Metallophosphoesterase 1 (Macaca fascicularis (Crab-eating macaque)).